The chain runs to 1024 residues: Beta-galactosidase (1024 aa).

Residues Asn103 and Asp202 each contribute to the substrate site. Asp202 provides a ligand contact to Na(+). 3 residues coordinate Mg(2+): Glu417, His419, and Glu462. Residues Glu462 and 538-541 (EYAH) each bind substrate. Glu462 (proton donor) is an active-site residue. Glu538 acts as the Nucleophile in catalysis. Residue Asn598 participates in Mg(2+) binding. Na(+) is bound by residues Phe602 and Asn605. Residues Asn605 and Trp1000 each contribute to the substrate site.

The protein belongs to the glycosyl hydrolase 2 family. Homotetramer. It depends on Mg(2+) as a cofactor. The cofactor is Na(+).

It catalyses the reaction Hydrolysis of terminal non-reducing beta-D-galactose residues in beta-D-galactosides.. The chain is Beta-galactosidase from Escherichia coli O6:K15:H31 (strain 536 / UPEC).